Consider the following 631-residue polypeptide: MKTYVSNEYDVIVVGAGHAGCEAALASARMGEKTLLLTISLDMVAFMPCNPSVGGPAKGTVVREIDALGGEMGKNIDKTYIQMRMLNTGKGPAVRALRAQADKWDYHEEMKRTIENTPNLTLRQAVVDDLIVEDGECRGVVTNTGARYRAKSVVLTTGTAARGRIFIGELNYSSGPNNTIPAIKLSESLERLGFKLRRFKTGTPPRVNRHTIDYSKTEEEPGDKEPRHFSFTSRDEDYLTDQTSCWMTYTNPKTHEIINENLDRSPMFSGDIVGVGPRYCPSIETKVVRFADKDRHQIFLEPEGRKTEEIYVGDFSTSMPEEVQLEMLHTVAGLEKVEMMRPGYAIEYDVVDPWQLTHTLETKRIKHLYTAGQMNGTSGYEEAAGQGLIAGINAALSAEGKPAFTLGRDEAYIGVLIDDLVTKGTEEPYRLLTSRAEYRLLLRHDNADLRLTEKGHDLGLIDDDRYAEFLAKKELIQEDLDRLGEITVHPTIAVNEYLAGLGQTDLNGGVKADVFLRRPRVTVEDVERLTGQKLAGDRYVKEQVEIDIKYAGYIKKQEIQVARLRRQEAKKIPKDIDYDQIEGLATEAREKLAKIRPETLAQAERISGVNPADLAILSVYVQNGKYAKVQK.

15–20 is an FAD binding site; it reads GAGHAG. The tract at residues 214–233 is disordered; the sequence is YSKTEEEPGDKEPRHFSFTS. 276–290 is an NAD(+) binding site; the sequence is GPRYCPSIETKVVRF.

The protein belongs to the MnmG family. Homodimer. Heterotetramer of two MnmE and two MnmG subunits. FAD is required as a cofactor.

It localises to the cytoplasm. In terms of biological role, NAD-binding protein involved in the addition of a carboxymethylaminomethyl (cmnm) group at the wobble position (U34) of certain tRNAs, forming tRNA-cmnm(5)s(2)U34. The chain is tRNA uridine 5-carboxymethylaminomethyl modification enzyme MnmG from Lactobacillus delbrueckii subsp. bulgaricus (strain ATCC BAA-365 / Lb-18).